The primary structure comprises 229 residues: Flagellar L-ring protein (229 aa).

The signal sequence occupies residues 1–20; it reads MLKTVLRLPVCAALLALAAG. Cysteine 21 carries the N-palmitoyl cysteine lipid modification. A lipid anchor (S-diacylglycerol cysteine) is attached at cysteine 21.

The protein belongs to the FlgH family. In terms of assembly, the basal body constitutes a major portion of the flagellar organelle and consists of four rings (L,P,S, and M) mounted on a central rod.

It is found in the cell outer membrane. The protein localises to the bacterial flagellum basal body. Functionally, assembles around the rod to form the L-ring and probably protects the motor/basal body from shearing forces during rotation. The chain is Flagellar L-ring protein from Bordetella pertussis (strain Tohama I / ATCC BAA-589 / NCTC 13251).